A 1332-amino-acid chain; its full sequence is Abscisic-aldehyde oxidase (1332 aa).

The 2Fe-2S ferredoxin-type domain maps to 1–88 (MDLEFAVNGE…GCSITTSEGL (88 aa)). 3 residues coordinate [2Fe-2S] cluster: Cys-40, Cys-45, and Cys-48. The FAD-binding PCMH-type domain maps to 219-400 (SDHLKYRWTT…LKVEIPSWTA (182 aa)).

It belongs to the xanthine dehydrogenase family. Aldehyde oxidases (AO) are homodimers and heterodimers of AO subunits. AO-delta is a AAO3 homodimer. AAO3 also forms a dimer with AAO2. Interacts with PUB44, and this interaction probably results in targeting of this protein to the proteasome. Requires [2Fe-2S] cluster as cofactor. FAD is required as a cofactor. The cofactor is Mo-molybdopterin. As to expression, expressed in vascular tissues of all organs, particularly in phloem companion cells and xylem parenchymatic cells. Highly expressed in roots and rosettes, and to lower extent in seedlings, stems and flowers. Expressed at very low levels in siliques and dry seeds. Also detected in root dividing cells (tips and primordia), in mesophyll cells and inside the guard cells.

It is found in the cytoplasm. The enzyme catalyses 2-cis-(+)-abscisic aldehyde + O2 + H2O = 2-cis-(+)-abscisate + H2O2 + H(+). The catalysed reaction is 1-naphthaldehyde + O2 + H2O = 1-naphthoate + H2O2 + H(+). It catalyses the reaction indole-3-acetaldehyde + O2 + H2O = (indol-3-yl)acetate + H2O2 + H(+). Its function is as follows. In higher plants aldehyde oxidases (AO) appear to be homo- and heterodimeric assemblies of AO subunits with probably different physiological functions. AO-delta may be involved in the last step of abscisic acid biosynthesis, at least in leaves and seeds. In vitro, AO-delta oxidizes abscisic aldehyde to abscisic acid (ABA). In vitro, AO-delta also uses 1-naphthaldehyde, indole-3-aldehyde (IAld), benzaldehyde and cinnamaldehyde as substrate; the AAO2-AAO3 dimer also uses abscisic aldehyde as substrate. This chain is Abscisic-aldehyde oxidase (AAO3), found in Arabidopsis thaliana (Mouse-ear cress).